A 194-amino-acid chain; its full sequence is uncharacterized protein (194 aa).

The protein belongs to the calycin superfamily. Fatty-acid binding protein (FABP) family.

This is an uncharacterized protein from Caenorhabditis elegans.